Consider the following 231-residue polypeptide: Large ribosomal subunit protein uL1 (231 aa).

Belongs to the universal ribosomal protein uL1 family. Part of the 50S ribosomal subunit.

In terms of biological role, binds directly to 23S rRNA. The L1 stalk is quite mobile in the ribosome, and is involved in E site tRNA release. Protein L1 is also a translational repressor protein, it controls the translation of the L11 operon by binding to its mRNA. The polypeptide is Large ribosomal subunit protein uL1 (Thiobacillus denitrificans (strain ATCC 25259 / T1)).